The primary structure comprises 1342 residues: DNA-directed RNA polymerase subunit beta (1342 aa).

N6-acetyllysine occurs at positions 1022 and 1200.

This sequence belongs to the RNA polymerase beta chain family. As to quaternary structure, the RNAP catalytic core consists of 2 alpha, 1 beta, 1 beta' and 1 omega subunit. When a sigma factor is associated with the core the holoenzyme is formed, which can initiate transcription.

It carries out the reaction RNA(n) + a ribonucleoside 5'-triphosphate = RNA(n+1) + diphosphate. In terms of biological role, DNA-dependent RNA polymerase catalyzes the transcription of DNA into RNA using the four ribonucleoside triphosphates as substrates. This is DNA-directed RNA polymerase subunit beta from Shigella dysenteriae serotype 1 (strain Sd197).